Reading from the N-terminus, the 2245-residue chain is Myosin-J heavy chain (2245 aa).

Positions 25-77 constitute a Myosin N-terminal SH3-like domain; the sequence is QEGAGVWIPDQELGWIGADVIEHSETSADQVLVRTEDDREVKIPLSKVFQKNP. Residues 81–821 form the Myosin motor domain; the sequence is EGVDDLSFLS…QLASLEDMRL (741 aa). Residue 174–181 participates in ATP binding; the sequence is GESGAGKT. The disordered stretch occupies residues 646 to 672; it reads FTQSPGGHPQGNGGPTSSNTKGTSGSS. The span at 660-672 shows a compositional bias: low complexity; it reads PTSSNTKGTSGSS. Residues 669–749 are actin-binding; that stretch reads SGSSSMKFLS…GFPTRRLLSE (81 aa). IQ domains follow at residues 824 to 851, 872 to 901, and 943 to 972; these read LDRS…RDAS, RTHS…ASLQ, and KLRG…EARS. Residues 973–1812 are a coiled coil; sequence LRTVQEQKNK…NYHMLEDRME (840 aa). The disordered stretch occupies residues 1504-1524; it reads KKQLTQLQQQHEQSSTQLLLA. Residues 1506-1523 show a composition bias toward low complexity; it reads QLTQLQQQHEQSSTQLLL. The Dilute domain occupies 1969 to 2188; it reads IDFIDQLQQS…IASICPPNKS (220 aa).

This sequence belongs to the TRAFAC class myosin-kinesin ATPase superfamily. Myosin family. As to quaternary structure, homodimer that associates with six light chains.

It localises to the contractile vacuole. Functionally, processive motor protein that can move over long distances along F-actin without disassociating; processiveness depends on high physiological Mg(2+) concentrations. Presents a high actin affinity in the presence of ADP, fast ATP hydrolysis, and a high steady-state ATPase activity in the presence of actin that is rate limited by ADP release. Physiological decrease of free Mg(2+) ions leads to an increased rate of ADP release and shortening of the fraction of time it spends in the strong acting binding states. The sequence is that of Myosin-J heavy chain (myoJ) from Dictyostelium discoideum (Social amoeba).